A 982-amino-acid polypeptide reads, in one-letter code: Serine/threonine-protein kinase PknD (982 aa).

The Protein kinase domain occupies tyrosine 51–leucine 342. Residues isoleucine 57 to valine 65 and lysine 80 each bind ATP. The Proton acceptor role is filled by aspartate 186.

The protein belongs to the protein kinase superfamily. Ser/Thr protein kinase family. Post-translationally, autophosphorylated on serine and threonine residues.

It carries out the reaction L-seryl-[protein] + ATP = O-phospho-L-seryl-[protein] + ADP + H(+). The enzyme catalyses L-threonyl-[protein] + ATP = O-phospho-L-threonyl-[protein] + ADP + H(+). Its function is as follows. Together with the serine/threonine kinase Pkn1, may play a role in the specific interactions with host proteins during intracellular growth. This is Serine/threonine-protein kinase PknD from Protochlamydia amoebophila (strain UWE25).